Reading from the N-terminus, the 491-residue chain is Trigger factor (491 aa).

One can recognise a PPIase FKBP-type domain in the interval 169 to 254; the sequence is GDRVTIDYLG…VKDVAAAAPI (86 aa). The disordered stretch occupies residues 433–491; the sequence is KTVSKDELMAEDEAEDKPAKKAPAKKKAAAKAEAGEGEEAAAPKKKAPAKKKAADDSAE. Over residues 452–461 the composition is skewed to basic residues; that stretch reads KKAPAKKKAA.

Belongs to the FKBP-type PPIase family. Tig subfamily.

It is found in the cytoplasm. The catalysed reaction is [protein]-peptidylproline (omega=180) = [protein]-peptidylproline (omega=0). Functionally, involved in protein export. Acts as a chaperone by maintaining the newly synthesized protein in an open conformation. Functions as a peptidyl-prolyl cis-trans isomerase. This Sinorhizobium fredii (strain NBRC 101917 / NGR234) protein is Trigger factor.